A 434-amino-acid polypeptide reads, in one-letter code: Putative DD-carboxypeptidase TP_0574 (434 aa).

A signal peptide spans 1–19 (MKVKYALLSAGALQLLVVG). Cysteine 20 carries N-palmitoyl cysteine lipidation. Cysteine 20 carries the S-diacylglycerol cysteine lipid modification.

Probably a monomer; a non-lipidated construct (residues 22-434) is monomeric in solution but crystallizes as a homodimer. It depends on Zn(2+) as a cofactor. Post-translationally, the N-terminus is blocked. Present as a doublet of low abundance 48 kDa and high abundance 47 kDa proteins. The longer form is probably due to readthrough of the stop codon; the extra amino acids at the C-terminus would be X-Lys-Arg-Gly-Val-Leu-Ser-Arg-Val-Ser, a peptide antibody against this sequence detects only the 48 kDa form.

It localises to the cell inner membrane. A possible D,D-carboxypeptidase, that releases amino acids sequentially from a proteins C-terminus. Has zinc-dependent carboxypeptidase activity on synthetic depsipeptide substrates. May serve to decrease cross-linking of peptidoglycan, promoting the highly sinusous motility of this spirochaete. Overexpression of the whole protein in E.coli leads to aberrant cell morphology and extrusion of the cytoplasm, while overexpression of a construct with the first 62 resides of the protein fused to PhoA does have this effect, suggesting the whole protein, not the lipoprotein moiety, is toxic. Binds penicillin. Penicillin binding is covalent, does not require lipidation, and is zinc-dependent. While this protein has beta-lactamase activity in vitro, that is probably not its role in vivo, as T.pallidum is very sensitive to penicillin antibiotics. In terms of biological role, a pathogen-specific membrane antigen. Most abundant of the membrane lipoproteins, only found in pathogenic treponemes, suggesting that it is an important structural moiety in the cell envelope of virulent treponemal subspecies. A lipopeptide corresponding to the first 6 mature residues induces host (human and mouse) cytokine release by monocyte cell lines via TLR2 and CD14; nonlipidated protein does not stimulate host cells. Stimulates host (human) dendritic cell maturation to become MHC class II-positive antigen presenting cells via TLR2, which depends on lipidation; nonlipidated protein does not stimulate maturation. This Treponema pallidum (strain Nichols) protein is Putative DD-carboxypeptidase TP_0574.